A 316-amino-acid polypeptide reads, in one-letter code: Ornithine carbamoyltransferase (316 aa).

Carbamoyl phosphate contacts are provided by residues 57–60 (STRT), Gln84, Arg108, and 135–138 (HPCQ). L-ornithine-binding positions include Asn166, Asp230, and 234 to 235 (SM). Residues 269–270 (CL) and Arg297 each bind carbamoyl phosphate.

It belongs to the aspartate/ornithine carbamoyltransferase superfamily. OTCase family.

It is found in the cytoplasm. It carries out the reaction carbamoyl phosphate + L-ornithine = L-citrulline + phosphate + H(+). It participates in amino-acid degradation; L-arginine degradation via ADI pathway; carbamoyl phosphate from L-arginine: step 2/2. Functionally, reversibly catalyzes the transfer of the carbamoyl group from carbamoyl phosphate (CP) to the N(epsilon) atom of ornithine (ORN) to produce L-citrulline. This chain is Ornithine carbamoyltransferase, found in Bacillus anthracis (strain CDC 684 / NRRL 3495).